We begin with the raw amino-acid sequence, 942 residues long: DDB1- and CUL4-associated factor 5 (942 aa).

6 WD repeats span residues 51 to 91, 99 to 139, 140 to 180, 185 to 225, 277 to 317, and 331 to 370; these read GHFG…HSRV, EHHS…LDVF, AHED…HGEP, NYPS…SSLL, FNSC…EAGG, and GHRS…GCTG. 2 disordered regions span residues 449-478 and 490-509; these read GVSE…ESAD and TTNT…AASR. The segment covering 454-465 has biased composition (polar residues); that stretch reads SGYTDSESSASL. The residue at position 500 (T500) is a Phosphothreonine. 7 positions are modified to phosphoserine: S531, S533, S626, S628, S645, S648, and S651. Disordered regions lie at residues 544–655, 676–824, and 889–942; these read TDLF…DIES, NNKD…EERS, and ACET…KLKT. Positions 625 to 641 are enriched in low complexity; the sequence is LSSSPTSSPERSTSTLE. Basic and acidic residues-rich tracts occupy residues 690-701 and 728-738; these read DEGRAGTSHKDN and CSKDTFKEETP. Residues 760–770 are compositionally biased toward polar residues; sequence GTSQDTGNSGS. S794 is modified (phosphoserine). Positions 801–815 are enriched in polar residues; it reads SGSTLNSGSGNCPRT.

In terms of assembly, interacts with DDB1, CUL4A or CUL4B. Interacts with L3MBTL3. Interacts with DNMT1. Interacts with E2F1. Interacts with SOX2. Ubiquitous.

Its pathway is protein modification; protein ubiquitination. Is a substrate receptor for the CUL4-DDB1 E3 ubiquitin-protein ligase complex (CRL4). The complex CRL4-DCAF5 is involved in the ubiquitination of a set of methylated non-histone proteins, including SOX2, DNMT1 and E2F1. This chain is DDB1- and CUL4-associated factor 5 (DCAF5), found in Homo sapiens (Human).